A 593-amino-acid chain; its full sequence is Serine/threonine-protein kinase SSN3 (593 aa).

The 400-residue stretch at 90–489 (YEIIGYIAAG…AIDALDHVYF (400 aa)) folds into the Protein kinase domain. Residue 96–104 (IAAGTYGKV) participates in ATP binding. The disordered stretch occupies residues 161-199 (KPSHKRFTPPNNSNSTQIRSNSGSETNVRINSSSITNNS). Polar residues predominate over residues 169 to 185 (PPNNSNSTQIRSNSGSE). A compositionally biased stretch (low complexity) spans 186–199 (TNVRINSSSITNNS). Lys211 lines the ATP pocket. Catalysis depends on Asp312, which acts as the Proton acceptor. Disordered regions lie at residues 517-551 (DNDI…NMNG) and 569-593 (AAVS…KKRK). A compositionally biased stretch (polar residues) spans 518-536 (NDITNVGNDNNQANHSQKQ). Residues 540–551 (GNNNNKNGNMNG) show a composition bias toward low complexity. A compositionally biased stretch (polar residues) spans 573 to 585 (GNGNNPTSNTATG).

This sequence belongs to the protein kinase superfamily. CMGC Ser/Thr protein kinase family. CDC2/CDKX subfamily. As to quaternary structure, component of the SRB8-11 complex, a regulatory module of the Mediator complex. Mg(2+) is required as a cofactor.

Its subcellular location is the nucleus. The catalysed reaction is L-seryl-[protein] + ATP = O-phospho-L-seryl-[protein] + ADP + H(+). It catalyses the reaction L-threonyl-[protein] + ATP = O-phospho-L-threonyl-[protein] + ADP + H(+). It carries out the reaction [DNA-directed RNA polymerase] + ATP = phospho-[DNA-directed RNA polymerase] + ADP + H(+). In terms of biological role, component of the SRB8-11 complex. The SRB8-11 complex is a regulatory module of the Mediator complex which is itself involved in regulation of basal and activated RNA polymerase II-dependent transcription. The SRB8-11 complex may be involved in the transcriptional repression of a subset of genes regulated by Mediator. It may inhibit the association of the Mediator complex with RNA polymerase II to form the holoenzyme complex. The SRB8-11 complex phosphorylates the C-terminal domain (CTD) of the largest subunit of RNA polymerase II. The protein is Serine/threonine-protein kinase SSN3 (SSN3) of Kluyveromyces lactis (strain ATCC 8585 / CBS 2359 / DSM 70799 / NBRC 1267 / NRRL Y-1140 / WM37) (Yeast).